A 182-amino-acid polypeptide reads, in one-letter code: Large ribosomal subunit protein uL6 (182 aa).

This sequence belongs to the universal ribosomal protein uL6 family. As to quaternary structure, part of the 50S ribosomal subunit.

This protein binds to the 23S rRNA, and is important in its secondary structure. It is located near the subunit interface in the base of the L7/L12 stalk, and near the tRNA binding site of the peptidyltransferase center. This is Large ribosomal subunit protein uL6 from Pelotomaculum thermopropionicum (strain DSM 13744 / JCM 10971 / SI).